We begin with the raw amino-acid sequence, 306 residues long: MGEYGIAPGQRVAVIWDSSSPVEALKGLVDAVQASVGADSRVSVENINQLCQSAHRESSFDVILSGVVPGSTAQHSAEVLAEIARILKPGGRVLLKEPVVTESENNSQIKTAAKLPAALTLSGLVEVKGLQKEPLTAEEAQSVREHLGYQGNDLLIVQIEGRKPNFEVGSSSQLKLSFAKKTSPSGKPSVDPATAKLWTLSASDMNDEEMDLLDSDELLDSEDLKKPDPASLRAPSCKEKGKKKACKNCTCGLAEELEQEKKSSQPKSACGNCYLGDAFRCASCPYLGDACLQAWREDPAEREPAA.

The N-terminal SAM-like domain stretch occupies residues 6 to 172; it reads IAPGQRVAVI…KPNFEVGSSS (167 aa). Residues 173–224 are linker; it reads QLKLSFAKKTSPSGKPSVDPATAKLWTLSASDMNDEEMDLLDSDELLDSEDL. Residues Cys-237, Cys-246, Cys-249, and Cys-251 each coordinate [2Fe-2S] cluster. Residues 237-251 form a fe-S binding site A region; that stretch reads CKEKGKKKACKNCTC. Residues Cys-270, Cys-273, Cys-281, and Cys-284 each contribute to the [4Fe-4S] cluster site. 2 consecutive short sequence motifs (cx2C motif) follow at residues 270–273 and 281–284; these read CGNC and CASC. Positions 270 to 284 are fe-S binding site B; sequence CGNCYLGDAFRCASC.

Belongs to the anamorsin family. Monomer. Interacts with NDOR1. Interacts with CHCHD4. [2Fe-2S] cluster serves as cofactor. [4Fe-4S] cluster is required as a cofactor.

Its subcellular location is the cytoplasm. It is found in the nucleus. It localises to the mitochondrion intermembrane space. In terms of biological role, component of the cytosolic iron-sulfur (Fe-S) protein assembly (CIA) machinery required for the maturation of extramitochondrial Fe-S proteins. Part of an electron transfer chain functioning in an early step of cytosolic Fe-S biogenesis, facilitating the de novo assembly of a [4Fe-4S] cluster on the scaffold complex NUBP1-NUBP2. Electrons are transferred to CIAPIN1 from NADPH via the FAD- and FMN-containing protein NDOR1. NDOR1-CIAPIN1 are also required for the assembly of the diferric tyrosyl radical cofactor of ribonucleotide reductase (RNR), probably by providing electrons for reduction during radical cofactor maturation in the catalytic small subunit. Has anti-apoptotic effects in the cell. Involved in negative control of cell death upon cytokine withdrawal. Promotes development of hematopoietic cells. This chain is Anamorsin, found in Gallus gallus (Chicken).